The sequence spans 219 residues: MMATVTVLDYGSGNVRSAVRALERAGAEVTLSAKADDVLNADGLVVPGVGAFATVMKELKSVDALRMIGRRVAGGRPVLAICVGLQILFEAGVEHGNSEPGMGEWPGTVELLPADVVPHMGWNTVQAPADSMLFDGVRDERFYFVHSYGVQHWDFDVTQPKMKPPAVTWSEHGAKFIAAVENGPLCATQFHPEKSDDAGARLLKNWVDSLPATGRNQVA.

Residues 4 to 216 enclose the Glutamine amidotransferase type-1 domain; the sequence is TVTVLDYGSG…VDSLPATGRN (213 aa). The active-site Nucleophile is the C82. Active-site residues include H191 and E193.

In terms of assembly, heterodimer of HisH and HisF.

It is found in the cytoplasm. The catalysed reaction is 5-[(5-phospho-1-deoxy-D-ribulos-1-ylimino)methylamino]-1-(5-phospho-beta-D-ribosyl)imidazole-4-carboxamide + L-glutamine = D-erythro-1-(imidazol-4-yl)glycerol 3-phosphate + 5-amino-1-(5-phospho-beta-D-ribosyl)imidazole-4-carboxamide + L-glutamate + H(+). It catalyses the reaction L-glutamine + H2O = L-glutamate + NH4(+). It functions in the pathway amino-acid biosynthesis; L-histidine biosynthesis; L-histidine from 5-phospho-alpha-D-ribose 1-diphosphate: step 5/9. Functionally, IGPS catalyzes the conversion of PRFAR and glutamine to IGP, AICAR and glutamate. The HisH subunit catalyzes the hydrolysis of glutamine to glutamate and ammonia as part of the synthesis of IGP and AICAR. The resulting ammonia molecule is channeled to the active site of HisF. The polypeptide is Imidazole glycerol phosphate synthase subunit HisH (Renibacterium salmoninarum (strain ATCC 33209 / DSM 20767 / JCM 11484 / NBRC 15589 / NCIMB 2235)).